The chain runs to 289 residues: Aquaporin PIP1-2 (289 aa).

The segment at 1 to 36 (MEGKEEDVRLGANKFSERQPIGTAAQGAADDKDYKE) is disordered. The next 2 membrane-spanning stretches (helical) occupy residues 58–78 (IAEFVATFLFLYITILTVMGV) and 93–115 (IAWSFGGMIFALVYCTAGISGGH). The short motif at 117–119 (NPA) is the NPA 1 element. 3 consecutive transmembrane segments (helical) span residues 136-156 (LFYIIMQCLGAVCGAGVVKGF), 178-198 (GDGLGAEIVGTFILVYTVFSA), and 212-232 (ILAPLPIGFAVFLVHLATIPI). Positions 238 to 240 (NPA) match the NPA 2 motif. The helical transmembrane segment at 260 to 280 (IFWVGPFIGAALAAIYHQVII) threads the bilayer.

The protein belongs to the MIP/aquaporin (TC 1.A.8) family. PIP (TC 1.A.8.11) subfamily. Interacts with PIP2-1 to form heteromers. As to expression, highly expressed in developing tassels and at lower levels in roots, shoots, ears and embryos. Expressed in the root growing zone at 5-6 mm from the root tip. Expressed in xylem parenchyma.

Its subcellular location is the cell membrane. Water channel required to facilitate the transport of water across cell membrane. Active as heteromers with PIP1-1, PIP2-1, PIP2-4 or PIP2-5, but not as homomers. This Zea mays (Maize) protein is Aquaporin PIP1-2 (PIP1-2).